A 140-amino-acid polypeptide reads, in one-letter code: Putative transmembrane protein 49 (140 aa).

The next 2 membrane-spanning stretches (helical) occupy residues 23-43 (LIMSAIAGVIAGAFGGGIGGV) and 93-110 (IAVHYIVLFLRLAYRYMY).

The protein localises to the host membrane. The sequence is that of Putative transmembrane protein 49 (SIFV0049) from Saccharolobus islandicus (Sulfolobus islandicus).